A 125-amino-acid chain; its full sequence is Small ribosomal subunit protein bS6 (125 aa).

Positions serine 100 to glutamate 125 are disordered. Positions lysine 104–threonine 113 are enriched in basic and acidic residues. Positions glutamate 116–glutamate 125 are enriched in acidic residues.

Belongs to the bacterial ribosomal protein bS6 family.

Its function is as follows. Binds together with bS18 to 16S ribosomal RNA. The protein is Small ribosomal subunit protein bS6 of Histophilus somni (strain 129Pt) (Haemophilus somnus).